Consider the following 104-residue polypeptide: L-rhamnose mutarotase (104 aa).

Substrate is bound at residue Y18. The Proton donor role is filled by H22. Residues Y41 and 76-77 (WW) contribute to the substrate site.

It belongs to the rhamnose mutarotase family. Homodimer.

The protein resides in the cytoplasm. It carries out the reaction alpha-L-rhamnose = beta-L-rhamnose. It participates in carbohydrate metabolism; L-rhamnose metabolism. Its function is as follows. Involved in the anomeric conversion of L-rhamnose. This Opitutus terrae (strain DSM 11246 / JCM 15787 / PB90-1) protein is L-rhamnose mutarotase.